Reading from the N-terminus, the 582-residue chain is Phosphoglucomutase, cytoplasmic (582 aa).

Residues R25 and S124 each contribute to the alpha-D-glucose 1,6-bisphosphate site. The Phosphoserine intermediate role is filled by S124. The Mg(2+) site is built by S124, D299, D301, and D303. The residue at position 124 (S124) is a Phosphoserine. Residues D303, R304, T367, E386, S388, and K399 each coordinate alpha-D-glucose 1,6-bisphosphate.

This sequence belongs to the phosphohexose mutase family. As to quaternary structure, monomer. It depends on Mg(2+) as a cofactor.

The protein resides in the cytoplasm. The catalysed reaction is alpha-D-glucose 1-phosphate = alpha-D-glucose 6-phosphate. It catalyses the reaction O-phospho-L-seryl-[protein] + alpha-D-glucose 1-phosphate = alpha-D-glucose 1,6-bisphosphate + L-seryl-[protein]. The enzyme catalyses alpha-D-glucose 1,6-bisphosphate + L-seryl-[protein] = O-phospho-L-seryl-[protein] + alpha-D-glucose 6-phosphate. Its function is as follows. Catalyzes the reversible isomerization of alpha-D-glucose 1-phosphate to alpha-D-glucose 6-phosphate. The mechanism proceeds via the intermediate compound alpha-D-glucose 1,6-bisphosphate. This enzyme participates in both the breakdown and synthesis of glucose. This Populus tremula (European aspen) protein is Phosphoglucomutase, cytoplasmic (PGM1).